Consider the following 575-residue polypeptide: Amyloid-beta A4 precursor protein-binding family A member 3 (575 aa).

M1 is subject to N-acetylmethionine. A compositionally biased stretch (polar residues) spans 1–10 (MDFPTISRSP). Disordered regions lie at residues 1–50 (MDFP…LSRM) and 118–211 (CEEC…GPCD). S11 carries the phosphoserine modification. A compositionally biased stretch (acidic residues) spans 143–153 (EDPDEDSDSPE). Positions 156-184 (EGASAEQEGSRSSSSSPEPWLETVPLVTP) are enriched in low complexity. The residue at position 171 (S171) is a Phosphoserine. Positions 215–364 (LLDGVIFGAR…QFLRESGIDP (150 aa)) are required for interaction with NECAB3. The PID domain occupies 217–381 (DGVIFGARYL…SPGACHLHNG (165 aa)). A Phosphoserine modification is found at S372. PDZ domains lie at 394–480 (EVHL…IVHC) and 485–560 (TAII…TMPA).

As to quaternary structure, binds to the cytoplasmic domain of amyloid protein (APP) in vivo. Interacts with HIF1AN (via N-terminus). Interacts with NECAB3; seems to mediate the interaction between NECAB3 and HIF1AN. Expressed in all tissues examined with lower levels in brain and testis.

It localises to the cytoplasm. It is found in the perinuclear region. May modulate processing of the amyloid-beta precursor protein (APP) and hence formation of APP-beta. May enhance the activity of HIF1A in macrophages by inhibiting the activity of HIF1AN. The polypeptide is Amyloid-beta A4 precursor protein-binding family A member 3 (APBA3) (Homo sapiens (Human)).